A 156-amino-acid chain; its full sequence is Small ribosomal subunit protein uS7 (156 aa).

This sequence belongs to the universal ribosomal protein uS7 family. As to quaternary structure, part of the 30S ribosomal subunit. Contacts proteins S9 and S11.

Its function is as follows. One of the primary rRNA binding proteins, it binds directly to 16S rRNA where it nucleates assembly of the head domain of the 30S subunit. Is located at the subunit interface close to the decoding center, probably blocks exit of the E-site tRNA. This Parvibaculum lavamentivorans (strain DS-1 / DSM 13023 / NCIMB 13966) protein is Small ribosomal subunit protein uS7.